We begin with the raw amino-acid sequence, 294 residues long: Protoheme IX farnesyltransferase (294 aa).

9 helical membrane passes run 22-42 (VTQLAVFCAVIGMFLATPELP), 46-66 (IVVAATIGIWLLAGAAFAINC), 89-109 (ITVPQTLVFSGLIGGAGMWVL), 116-136 (LTMWLTFATFVGYAVIYTIIL), 143-163 (NIVIGGLSGAMPPALGWAAVA), 170-190 (AWILVLIIFIWTPPHFWALAL), 212-232 (FTQFHIWLYTIALVATTMLPF), 234-254 (VGMSGLIYLVSVAILDIIFVW), and 272-292 (FAYSIIYLSLLFAALLVDHYL).

The protein belongs to the UbiA prenyltransferase family. Protoheme IX farnesyltransferase subfamily.

It is found in the cell inner membrane. The enzyme catalyses heme b + (2E,6E)-farnesyl diphosphate + H2O = Fe(II)-heme o + diphosphate. The protein operates within porphyrin-containing compound metabolism; heme O biosynthesis; heme O from protoheme: step 1/1. In terms of biological role, converts heme B (protoheme IX) to heme O by substitution of the vinyl group on carbon 2 of heme B porphyrin ring with a hydroxyethyl farnesyl side group. This is Protoheme IX farnesyltransferase from Janthinobacterium sp. (strain Marseille) (Minibacterium massiliensis).